The chain runs to 108 residues: Glutaredoxin-1 (108 aa).

A Glutaredoxin domain is found at 3-106 (EEFVQQRLAN…DILSSIGVLR (104 aa)). A disulfide bond links Cys23 and Cys26.

The protein belongs to the glutaredoxin family.

Its subcellular location is the virion. Functionally, has thioltransferase and dehydroascorbate reductase activities. In Camelpox virus (strain M-96), this protein is Glutaredoxin-1 (OPG075).